A 412-amino-acid polypeptide reads, in one-letter code: Glucose-1-phosphate adenylyltransferase (412 aa).

Alpha-D-glucose 1-phosphate is bound by residues Y98, G163, 178–179 (EK), and S189.

The protein belongs to the bacterial/plant glucose-1-phosphate adenylyltransferase family. As to quaternary structure, homotetramer.

It carries out the reaction alpha-D-glucose 1-phosphate + ATP + H(+) = ADP-alpha-D-glucose + diphosphate. The protein operates within glycan biosynthesis; glycogen biosynthesis. Involved in the biosynthesis of ADP-glucose, a building block required for the elongation reactions to produce glycogen. Catalyzes the reaction between ATP and alpha-D-glucose 1-phosphate (G1P) to produce pyrophosphate and ADP-Glc. In Thermosipho africanus (strain TCF52B), this protein is Glucose-1-phosphate adenylyltransferase.